The chain runs to 612 residues: Dihydroxy-acid dehydratase (612 aa).

Mg(2+) is bound at residue D81. C122 provides a ligand contact to [2Fe-2S] cluster. Positions 123 and 124 each coordinate Mg(2+). K124 carries the post-translational modification N6-carboxylysine. Position 196 (C196) interacts with [2Fe-2S] cluster. E492 serves as a coordination point for Mg(2+). The active-site Proton acceptor is the S518.

The protein belongs to the IlvD/Edd family. Homodimer. The cofactor is [2Fe-2S] cluster. Mg(2+) is required as a cofactor.

It carries out the reaction (2R)-2,3-dihydroxy-3-methylbutanoate = 3-methyl-2-oxobutanoate + H2O. The catalysed reaction is (2R,3R)-2,3-dihydroxy-3-methylpentanoate = (S)-3-methyl-2-oxopentanoate + H2O. It participates in amino-acid biosynthesis; L-isoleucine biosynthesis; L-isoleucine from 2-oxobutanoate: step 3/4. Its pathway is amino-acid biosynthesis; L-valine biosynthesis; L-valine from pyruvate: step 3/4. Functionally, functions in the biosynthesis of branched-chain amino acids. Catalyzes the dehydration of (2R,3R)-2,3-dihydroxy-3-methylpentanoate (2,3-dihydroxy-3-methylvalerate) into 2-oxo-3-methylpentanoate (2-oxo-3-methylvalerate) and of (2R)-2,3-dihydroxy-3-methylbutanoate (2,3-dihydroxyisovalerate) into 2-oxo-3-methylbutanoate (2-oxoisovalerate), the penultimate precursor to L-isoleucine and L-valine, respectively. The chain is Dihydroxy-acid dehydratase from Cereibacter sphaeroides (strain ATCC 17029 / ATH 2.4.9) (Rhodobacter sphaeroides).